A 213-amino-acid polypeptide reads, in one-letter code: Pyrrolidone-carboxylate peptidase (213 aa).

Residues glutamate 78, cysteine 141, and histidine 165 contribute to the active site.

It belongs to the peptidase C15 family. As to quaternary structure, homotetramer.

The protein localises to the cytoplasm. It catalyses the reaction Release of an N-terminal pyroglutamyl group from a polypeptide, the second amino acid generally not being Pro.. Its function is as follows. Removes 5-oxoproline from various penultimate amino acid residues except L-proline. This is Pyrrolidone-carboxylate peptidase from Clostridium perfringens (strain ATCC 13124 / DSM 756 / JCM 1290 / NCIMB 6125 / NCTC 8237 / Type A).